Reading from the N-terminus, the 296-residue chain is Stanniocalcin-2 (296 aa).

Residues 1–24 (MCAERLGQFVTLALVFATLDPARG) form the signal peptide. Residues 22–44 (ARGTDSTNPPEGPQDRGSQQKGR) are disordered. An N-linked (GlcNAc...) asparagine glycan is attached at N73. Positions 236–296 (RPYHRDTDHH…EQSEYSDIRR (61 aa)) are disordered. A compositionally biased stretch (basic and acidic residues) spans 238–258 (YHRDTDHHLTANRGAKGERGS).

It belongs to the stanniocalcin family. As to quaternary structure, homodimer; disulfide-linked. As to expression, expressed in a variety of tissues. Strongly expressed in ovary and to a lesser extent in kidney.

It is found in the secreted. Functionally, has an anti-hypocalcemic action on calcium and phosphate homeostasis. This is Stanniocalcin-2 (Stc2) from Rattus norvegicus (Rat).